The chain runs to 247 residues: D-alanyl-D-alanine dipeptidase (247 aa).

Residues H140 and D147 each coordinate Zn(2+). Catalysis depends on E215, which acts as the Proton donor/acceptor. H218 contributes to the Zn(2+) binding site.

It belongs to the peptidase M15D family. The cofactor is Zn(2+).

Its subcellular location is the cytoplasm. The catalysed reaction is D-alanyl-D-alanine + H2O = 2 D-alanine. Catalyzes hydrolysis of the D-alanyl-D-alanine dipeptide. May have a role in cell-wall turnover. The polypeptide is D-alanyl-D-alanine dipeptidase (Synechocystis sp. (strain ATCC 27184 / PCC 6803 / Kazusa)).